The following is a 244-amino-acid chain: Octanoyltransferase (244 aa).

A BPL/LPL catalytic domain is found at 49-237 (VAPGNFLIFC…HLTALFELHI (189 aa)). Residues 94 to 101 (RGGDITYH), 167 to 169 (AMG), and 180 to 182 (GFA) each bind substrate. Cys-198 serves as the catalytic Acyl-thioester intermediate.

It belongs to the LipB family.

Its subcellular location is the cytoplasm. The enzyme catalyses octanoyl-[ACP] + L-lysyl-[protein] = N(6)-octanoyl-L-lysyl-[protein] + holo-[ACP] + H(+). It functions in the pathway protein modification; protein lipoylation via endogenous pathway; protein N(6)-(lipoyl)lysine from octanoyl-[acyl-carrier-protein]: step 1/2. Functionally, catalyzes the transfer of endogenously produced octanoic acid from octanoyl-acyl-carrier-protein onto the lipoyl domains of lipoate-dependent enzymes. Lipoyl-ACP can also act as a substrate although octanoyl-ACP is likely to be the physiological substrate. The polypeptide is Octanoyltransferase (Cytophaga hutchinsonii (strain ATCC 33406 / DSM 1761 / CIP 103989 / NBRC 15051 / NCIMB 9469 / D465)).